The sequence spans 390 residues: Enoyl-[acyl-carrier-protein] reductase [NADH], chloroplastic (390 aa).

Residues 1-74 (MAATAASSLQ…CKRPFSFSTR (74 aa)) constitute a chloroplast transit peptide. 2 residues coordinate NADP(+): L53 and N170. Catalysis depends on S239, which acts as the Proton donor. NADP(+) contacts are provided by K282 and S314. K282 (lowers pKa of active site Tyr) is an active-site residue.

It belongs to the short-chain dehydrogenases/reductases (SDR) family. FabI subfamily. In terms of assembly, homotetramer. In terms of tissue distribution, expressed in flowers and siliques and at lower levels in roots and leaves (at protein level).

It is found in the plastid. Its subcellular location is the chloroplast. It carries out the reaction a 2,3-saturated acyl-[ACP] + NAD(+) = a (2E)-enoyl-[ACP] + NADH + H(+). It participates in lipid metabolism; fatty acid biosynthesis. Inhibited by the phytotoxin cyperin and the synthetic antimicrobial compound triclosan. Catalyzes the NAD-dependent reduction of a carbon-carbon double bond in an enoyl moiety that is covalently linked to an acyl carrier protein (ACP). Catalyzes the last reduction step in the de novo synthesis cycle of fatty acids. Involved in the elongation cycle of fatty acids which are used in lipid metabolism. Required for normal plant growth. In Arabidopsis thaliana (Mouse-ear cress), this protein is Enoyl-[acyl-carrier-protein] reductase [NADH], chloroplastic (MOD1).